Reading from the N-terminus, the 341-residue chain is Ferredoxin--NADP reductase 2 (341 aa).

FAD contacts are provided by D42, Q50, Y55, I95, F129, D294, and S335.

It belongs to the ferredoxin--NADP reductase type 2 family. Homodimer. Requires FAD as cofactor.

It catalyses the reaction 2 reduced [2Fe-2S]-[ferredoxin] + NADP(+) + H(+) = 2 oxidized [2Fe-2S]-[ferredoxin] + NADPH. This chain is Ferredoxin--NADP reductase 2, found in Chloroherpeton thalassium (strain ATCC 35110 / GB-78).